Here is a 336-residue protein sequence, read N- to C-terminus: NADH-quinone oxidoreductase subunit H (336 aa).

A run of 8 helical transmembrane segments spans residues 4 to 24 (YILW…LVVA), 75 to 95 (YLFF…WAVI), 108 to 128 (LGLL…VIAG), 154 to 174 (MGFA…TGII), 181 to 201 (IWHW…IAGI), 233 to 253 (LFFL…SIMF), 272 to 292 (FVPG…MFLW), and 308 to 328 (LGWK…ACMV).

It belongs to the complex I subunit 1 family. NDH-1 is composed of 14 different subunits. Subunits NuoA, H, J, K, L, M, N constitute the membrane sector of the complex.

It is found in the cell inner membrane. The enzyme catalyses a quinone + NADH + 5 H(+)(in) = a quinol + NAD(+) + 4 H(+)(out). In terms of biological role, NDH-1 shuttles electrons from NADH, via FMN and iron-sulfur (Fe-S) centers, to quinones in the respiratory chain. The immediate electron acceptor for the enzyme in this species is believed to be ubiquinone. Couples the redox reaction to proton translocation (for every two electrons transferred, four hydrogen ions are translocated across the cytoplasmic membrane), and thus conserves the redox energy in a proton gradient. This subunit may bind ubiquinone. The polypeptide is NADH-quinone oxidoreductase subunit H (Francisella tularensis subsp. mediasiatica (strain FSC147)).